Reading from the N-terminus, the 94-residue chain is UPF0381 protein YfcZ (94 aa).

It belongs to the UPF0381 family.

This chain is UPF0381 protein YfcZ (yfcZ), found in Escherichia coli O6:H1 (strain CFT073 / ATCC 700928 / UPEC).